The chain runs to 273 residues: Giardin subunit beta (273 aa).

The interval 1 to 19 is nonhelical region; it reads MSMFTSTRTLTQTMDKPDD. The tract at residues 20–273 is rod; that stretch reads LTRSATETAV…GGLSMVTKHQ (254 aa). Coiled-coil stretches lie at residues 123-175 and 211-263; these read DTLN…YDQL and NTKL…SKIQ.

This sequence belongs to the SF-assemblin family. As to quaternary structure, interacts with BOP1 (via C-terminal WD repeats).

Its subcellular location is the cytoplasm. The protein resides in the cytoskeleton. Giardins are involved in parasite attachment to the intestinal mucosa and in the cytoskeletal disassembly and reassembly that marks the transition from infectious trophozoite to transmissible cyst. They may interact with other cytoskeletal proteins such as microtubules in the microribbons or crossbridges, to maintain the integrity of the ventral disk. This is Giardin subunit beta from Giardia intestinalis (Giardia lamblia).